The primary structure comprises 444 residues: Baeyer-Villiger oxidase ptaJ (444 aa).

It belongs to the questin oxidase family. Requires NADPH as cofactor.

Its pathway is secondary metabolite biosynthesis. Functionally, baeyer-Villiger oxidase; part of the gene cluster that mediates the biosynthesis of pestheic acid, a diphenyl ether which is a biosynthetic precursor of the unique chloropupukeananes. The biosynthesis initiates from condensation of acetate and malonate units catalyzed by the non-reducing PKS ptaA. As the ptaA protein is TE/CLC domain-deficient, hydrolysis and Claisen cyclization of the polyketide could be catalyzed by ptaB containing a beta-lactamase domain. The ptaB protein might hydrolyze the thioester bond between the ACP of ptaA and the intermediate to release atrochrysone carboxylic acid, which is spontaneously dehydrated to form endocrocin anthrone. Endocrocin anthrone is then converted to endocrocin, catalyzed by the anthrone oxygenase ptaC. Spontaneous decarboxylation of endocrocin occurs to generate emodin. An O-methyltransferase (ptaH or ptaI) could methylate emodin to form physcion. PtaJ could then catalyze the oxidative cleavage of physcion, and rotation of the intermediate could then afford desmethylisosulochrin. PtaF, a putative NADH-dependent oxidoreductase, might also participate in the oxidative cleavage step. Desmethylisosulochrin is then transformed by another O-methyltransferase (ptaH or ptaI) to form isosulochrin. Chlorination of isosulochrin by ptaM in the cyclohexadienone B ring then produces chloroisosulochrin. PtaE is responsible for the oxidative coupling reactions of both benzophenones isosulouchrin and chloroisosulouchrin to RES-1214-1 and pestheic acid respectively, regardless of chlorination. This Pestalotiopsis fici (strain W106-1 / CGMCC3.15140) protein is Baeyer-Villiger oxidase ptaJ.